The sequence spans 266 residues: MRLNIAPAPWPGAPVVVLSAGLGGGGGYWLAQRAALEAQYQLVSYDHNGTGENAGPLPADYSMATMAQELLSALQAAGITRFALVGHALGALIGLQLALDRPEAVSALVLVNGWLTLSPHTRRCFLVRERLLHAGGAQAWVEAQPLFLYPAEWMAARLPRLEAEDALAISHFQGKENLLKRLQALKQADFSRRAAAIACPTLIVSAADDLLVPASCSRVLQAAIPGSQRVEMPWGGHACNVTDADTFNTILCDGLAAMLPVAREIR.

Residues 14-238 (PVVVLSAGLG…RVEMPWGGHA (225 aa)) form the AB hydrolase-1 domain.

The protein belongs to the AB hydrolase superfamily. Hydrolase RutD family.

The catalysed reaction is carbamate + 2 H(+) = NH4(+) + CO2. Its function is as follows. Involved in pyrimidine catabolism. May facilitate the hydrolysis of carbamate, a reaction that can also occur spontaneously. The chain is Putative carbamate hydrolase RutD from Klebsiella pneumoniae (strain 342).